The primary structure comprises 134 residues: Terepressin/terephysin (134 aa).

Residues methionine 1 to glycine 33 form the signal peptide. Cysteines 34 and 39 form a disulfide. Positions lysine 44–valine 50 are excised as a propeptide. 7 disulfide bridges follow: cysteine 56-cysteine 100, cysteine 59-cysteine 73, cysteine 67-cysteine 90, cysteine 74-cysteine 80, cysteine 107-cysteine 121, cysteine 115-cysteine 133, and cysteine 122-cysteine 127.

The protein belongs to the vasopressin/oxytocin family. Contains 7 disulfide bonds. As to expression, expressed by the venom duct.

The protein localises to the secreted. This is Terepressin/terephysin from Terebra anilis (Auger snail).